We begin with the raw amino-acid sequence, 454 residues long: MALNVVILAAGKGTRMRSDLPKVLHPIAHKSMVQHVIDTAHSIGSDAIQLVYGYGADKLKSTLGEQKLNWILQAEQLGTGHAVAQAIPNIDDNDTVLILYGDVPLIQASTLEALLAARPEYGVAILTVNLANPMGYGRIVREQGKVVGIVEQKDANPEQLAINEVNTGIMAVPGNALKTWLDRLSNNNAQGEYYLTDIIAMAHADGVEINTAQPQSAIEVEGANNRVQLAQLERAYQAREAEKLMIAGANLRDPSRIDIRGEVTVGMDVMIDVNVIFEGKVVIGNNVTIGAGAIIIDTEIADNAEIKPYSIIEGAKLGVAASAGPFARLRPGAELMQDAHIGNFVEMKKAVLGVGSKAGHLAYLGDAQIGAGVNIGAGTITCNYDGANKHLTVIEDNVFVGSDTQLVAPVTIGKGATLGAGSTITRDVGEDELVITRVKQKHLTGWQRPVKIKK.

The segment at 1–226 (MALNVVILAA…AIEVEGANNR (226 aa)) is pyrophosphorylase. UDP-N-acetyl-alpha-D-glucosamine is bound by residues 8–11 (LAAG), lysine 22, glutamine 73, 78–79 (GT), 100–102 (YGD), glycine 137, glutamate 151, asparagine 166, and asparagine 224. Aspartate 102 serves as a coordination point for Mg(2+). Asparagine 224 serves as a coordination point for Mg(2+). The tract at residues 227–247 (VQLAQLERAYQAREAEKLMIA) is linker. The segment at 248-454 (GANLRDPSRI…GWQRPVKIKK (207 aa)) is N-acetyltransferase. Arginine 330 and lysine 348 together coordinate UDP-N-acetyl-alpha-D-glucosamine. The Proton acceptor role is filled by histidine 360. UDP-N-acetyl-alpha-D-glucosamine is bound by residues tyrosine 363 and asparagine 374. Acetyl-CoA-binding positions include alanine 377, 383-384 (NY), serine 402, alanine 420, and arginine 437.

It in the N-terminal section; belongs to the N-acetylglucosamine-1-phosphate uridyltransferase family. In the C-terminal section; belongs to the transferase hexapeptide repeat family. Homotrimer. Mg(2+) serves as cofactor.

The protein localises to the cytoplasm. It catalyses the reaction alpha-D-glucosamine 1-phosphate + acetyl-CoA = N-acetyl-alpha-D-glucosamine 1-phosphate + CoA + H(+). It carries out the reaction N-acetyl-alpha-D-glucosamine 1-phosphate + UTP + H(+) = UDP-N-acetyl-alpha-D-glucosamine + diphosphate. It participates in nucleotide-sugar biosynthesis; UDP-N-acetyl-alpha-D-glucosamine biosynthesis; N-acetyl-alpha-D-glucosamine 1-phosphate from alpha-D-glucosamine 6-phosphate (route II): step 2/2. The protein operates within nucleotide-sugar biosynthesis; UDP-N-acetyl-alpha-D-glucosamine biosynthesis; UDP-N-acetyl-alpha-D-glucosamine from N-acetyl-alpha-D-glucosamine 1-phosphate: step 1/1. It functions in the pathway bacterial outer membrane biogenesis; LPS lipid A biosynthesis. In terms of biological role, catalyzes the last two sequential reactions in the de novo biosynthetic pathway for UDP-N-acetylglucosamine (UDP-GlcNAc). The C-terminal domain catalyzes the transfer of acetyl group from acetyl coenzyme A to glucosamine-1-phosphate (GlcN-1-P) to produce N-acetylglucosamine-1-phosphate (GlcNAc-1-P), which is converted into UDP-GlcNAc by the transfer of uridine 5-monophosphate (from uridine 5-triphosphate), a reaction catalyzed by the N-terminal domain. In Shewanella oneidensis (strain ATCC 700550 / JCM 31522 / CIP 106686 / LMG 19005 / NCIMB 14063 / MR-1), this protein is Bifunctional protein GlmU.